The chain runs to 465 residues: Hexokinase-4 (465 aa).

One can recognise a Hexokinase domain in the interval 10 to 454; it reads ATKKEKVEQI…SGRGAALVSA (445 aa). The tract at residues 67-203 is hexokinase small subdomain; sequence EGSEVGDFLS…DFEMDVVAMV (137 aa). An ATP-binding site is contributed by 78-83; sequence DLGGTN. Substrate is bound by residues 151-152, 168-169, and 204-205; these read SF, TK, and ND. The interval 204-443 is hexokinase large subdomain; that stretch reads NDTVATMISC…CEITFIESEE (240 aa). Thr228 is a binding site for ATP. Residues Asn231, Glu256, and Glu290 each contribute to the substrate site. Residues 295 to 296, 332 to 336, and 411 to 415 each bind ATP; these read GK, TRFVS, and SVYKL.

Belongs to the hexokinase family. Monomer. Interacts with MIDN; the interaction occurs preferentially at low glucose levels and results in inhibition of hexokinase activity. Interacts with GCKR; leading to sequestration in the nucleus.

The protein localises to the cytoplasm. Its subcellular location is the nucleus. It localises to the mitochondrion. The catalysed reaction is a D-hexose + ATP = a D-hexose 6-phosphate + ADP + H(+). The enzyme catalyses D-fructose + ATP = D-fructose 6-phosphate + ADP + H(+). It carries out the reaction D-glucose + ATP = D-glucose 6-phosphate + ADP + H(+). It catalyses the reaction D-mannose + ATP = D-mannose 6-phosphate + ADP + H(+). The protein operates within carbohydrate metabolism; hexose metabolism. Its pathway is carbohydrate degradation; glycolysis; D-glyceraldehyde 3-phosphate and glycerone phosphate from D-glucose: step 1/4. With respect to regulation, subject to allosteric regulation. Low glucose and high fructose-6-phosphate triggers association with the inhibitor GCKR followed by sequestration in the nucleus. Its function is as follows. Catalyzes the phosphorylation of hexose, such as D-glucose, D-fructose and D-mannose, to hexose 6-phosphate (D-glucose 6-phosphate, D-fructose 6-phosphate and D-mannose 6-phosphate, respectively). Compared to other hexokinases, has a weak affinity for D-glucose, and is effective only when glucose is abundant. Mainly expressed in pancreatic beta cells and the liver and constitutes a rate-limiting step in glucose metabolism in these tissues. Since insulin secretion parallels glucose metabolism and the low glucose affinity of GCK ensures that it can change its enzymatic activity within the physiological range of glucose concentrations, GCK acts as a glucose sensor in the pancreatic beta cell. In pancreas, plays an important role in modulating insulin secretion. In liver, helps to facilitate the uptake and conversion of glucose by acting as an insulin-sensitive determinant of hepatic glucose usage. Required to provide D-glucose 6-phosphate for the synthesis of glycogen. Mediates the initial step of glycolysis by catalyzing phosphorylation of D-glucose to D-glucose 6-phosphate. The chain is Hexokinase-4 from Mus musculus (Mouse).